Consider the following 473-residue polypeptide: Beta-secretase 1 (473 aa).

Positions 1–21 (MAPALPWLLLWVGSGVLPVHG) are cleaved as a signal peptide. Positions 22–45 (TQDGIRLPLRSGLAGAPLGLRLPR) are excised as a propeptide. The Extracellular segment spans residues 22-429 (TQDGIRLPLR…PQTDESTLMT (408 aa)). Residues 72–388 (YYVEMTVGSP…DRARKRIGFA (317 aa)) enclose the Peptidase A1 domain. The active site involves aspartate 90. Lysine 123 carries the post-translational modification N6-acetyllysine. Residues asparagine 150, asparagine 169, and asparagine 195 are each glycosylated (N-linked (GlcNAc...) asparagine). 3 cysteine pairs are disulfide-bonded: cysteine 188/cysteine 392, cysteine 250/cysteine 415, and cysteine 302/cysteine 352. An N6-acetyllysine mark is found at lysine 247, lysine 251, and lysine 257. Aspartate 261 is a catalytic residue. 3 positions are modified to N6-acetyllysine: lysine 271, lysine 272, and lysine 279. N-linked (GlcNAc...) asparagine glycosylation is present at asparagine 326. Residues 430–450 (IAYVMAAICALFMLPLCLMVC) traverse the membrane as a helical segment. S-palmitoyl cysteine attachment occurs at residues cysteine 446, cysteine 450, cysteine 454, and cysteine 457. Residues 451–473 (QWRCLRCLRHQHDDFADDISLLK) are Cytoplasmic-facing. Residues 451-473 (QWRCLRCLRHQHDDFADDISLLK) are interaction with RTN3. A DXXLL motif is present at residues 468–472 (DISLL). Serine 470 carries the phosphoserine modification. Lysine 473 participates in a covalent cross-link: Glycyl lysine isopeptide (Lys-Gly) (interchain with G-Cter in ubiquitin).

The protein belongs to the peptidase A1 family. Monomer. Interacts (via DXXLL motif) with GGA1, GGA2 and GGA3 (via their VHS domain); the interaction highly increases when BACE1 is phosphorylated at Ser-470. Interacts with RTN1; RTN2; RTN3 and RTN4; the interaction leads to inhibition of amyloid precursor protein processing. Interacts with SNX6. Interacts with PCSK9. Interacts with NAT8 and NAT8B. Interacts with BIN1. Interacts (via extracellular domain) with ADAM10 (via extracellular domain). Interacts with SORL1; this interaction may affect binding with APP and hence reduce APP cleavage. Interacts with NRDC AND NRG1. Post-translationally, palmitoylation mediates lipid raft localization. In terms of processing, acetylated in the endoplasmic reticulum at Lys-123, Lys-247, Lys-251, Lys-257, Lys-271, Lys-272, and Lys-279. Acetylation by NAT8 and NAT8B is transient and deacetylation probably occurs in the Golgi. Acetylation regulates the maturation, the transport to the plasma membrane, the stability and the expression of the protein. Ubiquitinated at Lys-473, ubiquitination leads to lysosomal degradation. Monoubiquitinated and 'Lys-63'-linked polyubitinated. Deubiquitnated by USP8; inhibits lysosomal degradation. Post-translationally, phosphorylation at Ser-470 is required for interaction with GGA1 and retrograded transport from endosomal compartments to the trans-Golgi network. Non-phosphorylated BACE1 enters a direct recycling route to the cell surface. In terms of processing, N-Glycosylated. Addition of a bisecting N-acetylglucosamine by MGAT3 blocks lysosomal targeting, further degradation and is required for maintaining stability under stress conditions.

The protein resides in the cell membrane. Its subcellular location is the golgi apparatus. The protein localises to the trans-Golgi network. It localises to the endoplasmic reticulum. It is found in the endosome. The protein resides in the cell surface. Its subcellular location is the cytoplasmic vesicle membrane. The protein localises to the membrane raft. It localises to the lysosome. It is found in the late endosome. The protein resides in the early endosome. Its subcellular location is the recycling endosome. The protein localises to the cell projection. It localises to the axon. It is found in the dendrite. It carries out the reaction Broad endopeptidase specificity. Cleaves Glu-Val-Asn-Leu-|-Asp-Ala-Glu-Phe in the Swedish variant of Alzheimer's amyloid precursor protein.. Its activity is regulated as follows. Inhibited by RTN3 and RTN4. In terms of biological role, responsible for the proteolytic processing of the amyloid precursor protein (APP). Cleaves at the N-terminus of the A-beta peptide sequence, between residues 671 and 672 of APP, leads to the generation and extracellular release of beta-cleaved soluble APP, and a corresponding cell-associated C-terminal fragment which is later released by gamma-secretase. Cleaves CHL1. The chain is Beta-secretase 1 (BACE1) from Cavia porcellus (Guinea pig).